A 159-amino-acid chain; its full sequence is Protein Smg homolog (159 aa).

Belongs to the Smg family.

The chain is Protein Smg homolog from Vibrio vulnificus (strain CMCP6).